The sequence spans 111 residues: UPF0060 membrane protein XCC2880 (111 aa).

4 helical membrane passes run 8–28 (LLLFVATAVAELVGCYLPYLW), 34–54 (SVWLLLPAALSLAVFVWLLTL), 62–82 (VYAAYGGVYIATALLWLWWVD), and 91–111 (LLGAGCCLLGMAIIMFSPRSG).

Belongs to the UPF0060 family.

The protein resides in the cell inner membrane. The sequence is that of UPF0060 membrane protein XCC2880 from Xanthomonas campestris pv. campestris (strain ATCC 33913 / DSM 3586 / NCPPB 528 / LMG 568 / P 25).